The sequence spans 664 residues: UV-stimulated scaffold protein A homolog (664 aa).

A VHS-like region spans residues 10–153; it reads KVIGLIEKAT…LKNTLKLKFP (144 aa). Residues 148–180 are a coiled coil; the sequence is LKLKFPDLQANAARIQRERQEREMKTKEILRNK. Disordered stretches follow at residues 330–350 and 362–403; these read HGNEETNEEEEDIWEEDDGKV and MRTQ…GNSL. A compositionally biased stretch (acidic residues) spans 334–347; the sequence is ETNEEEEDIWEEDD. Positions 363-374 are enriched in polar residues; sequence RTQQSENSSLPS. Basic and acidic residues predominate over residues 377–387; sequence EAKKSTSEARS. The segment covering 388–402 has biased composition (polar residues); the sequence is NKVSNTKKVGSSGNS. The segment at 473-500 adopts a UVSSA-type zinc-finger fold; the sequence is TPPCRASLKKGGLCQRRDLRVCPFHGPI. Positions 476, 486, 494, and 497 each coordinate Zn(2+). Disordered regions lie at residues 514 to 546 and 640 to 664; these read SPLDESENQTSSTSGTNQDVSMDETTSDSDPNQ and VKGTNPQQLAQGNDEKCRDTSANQW. Polar residues-rich tracts occupy residues 521 to 533 and 640 to 650; these read NQTSSTSGTNQDV and VKGTNPQQLAQ.

This sequence belongs to the UVSSA family.

It localises to the chromosome. This chain is UV-stimulated scaffold protein A homolog, found in Arabidopsis thaliana (Mouse-ear cress).